A 508-amino-acid polypeptide reads, in one-letter code: CBL-interacting protein kinase 19 (508 aa).

The disordered stretch occupies residues 1–24 (MAATPPSSQHRRPLSSSASAASLA). The segment covering 14–24 (LSSSASAASLA) has biased composition (low complexity). The Protein kinase domain maps to 37 to 291 (YELGRLLGHG…VKEVMESRWF (255 aa)). ATP contacts are provided by residues 43–51 (LGHGTFAKV) and Lys-66. Asp-159 (proton acceptor) is an active-site residue. The activation loop stretch occupies residues 177–206 (DFGLSAVADQFHPDGLLHTFCGTPSYVAPE). The segment at 311–372 (ADGDNDMPEL…EERRQRPLGS (62 aa)) is disordered. Acidic residues predominate over residues 313–322 (GDNDMPELEP). The span at 323 to 337 (SEPPPPPPFPPPPPQ) shows a compositional bias: pro residues. Over residues 338–347 (QDDDGEESGW) the composition is skewed to acidic residues. The NAF domain occupies 354-398 (ASCPATLSSEERRQRPLGSLTRPASLNAFDIISFSKGFDLSGLFE). Residues 401 to 430 (GSEVRFISAEPMQTIITKLEEIAKVKSFFV) form a PPI region.

Belongs to the protein kinase superfamily. CAMK Ser/Thr protein kinase family. SNF1 subfamily. Mn(2+) is required as a cofactor. In terms of processing, autophosphorylated. As to expression, expressed in roots, leaf blades and sheaths and panicles.

The catalysed reaction is L-seryl-[protein] + ATP = O-phospho-L-seryl-[protein] + ADP + H(+). The enzyme catalyses L-threonyl-[protein] + ATP = O-phospho-L-threonyl-[protein] + ADP + H(+). CIPK serine-threonine protein kinases interact with CBL proteins. Binding of a CBL protein to the regulatory NAF domain of CIPK protein lead to the activation of the kinase in a calcium-dependent manner. In Oryza sativa subsp. japonica (Rice), this protein is CBL-interacting protein kinase 19 (CIPK19).